Reading from the N-terminus, the 1042-residue chain is Carbamoyl phosphate synthase large chain (1042 aa).

The carboxyphosphate synthetic domain stretch occupies residues 1–417 (MTEDSRTILL…SLLKALRSSE (417 aa)). The ATP site is built by R127, R182, G188, G189, E221, I223, E228, G254, I255, H256, Q297, and E314. In terms of domain architecture, ATP-grasp 1 spans 131 to 343 (RQRMADLGQP…IARVTAKVAL (213 aa)). The Mg(2+) site is built by Q297, E314, and N316. The Mn(2+) site is built by Q297, E314, and N316. The oligomerization domain stretch occupies residues 418 to 558 (YDPSVDWATV…SQGSTGSDVR (141 aa)). Positions 559 to 947 (ADRDAHSVVI…WKAQVAASNA (389 aa)) are carbamoyl phosphate synthetic domain. One can recognise an ATP-grasp 2 domain in the interval 689–880 (NRLLDERDIS…IAKLAAKVMA (192 aa)). ATP is bound by residues R725, E764, L766, E771, G796, V797, H798, S799, Q839, and E851. Positions 839, 851, and 853 each coordinate Mg(2+). 3 residues coordinate Mn(2+): Q839, E851, and N853. One can recognise an MGS-like domain in the interval 947-1042 (APVPGSTAVV…DRPVNDETWG (96 aa)). Residues 948-1042 (PVPGSTAVVD…DRPVNDETWG (95 aa)) form an allosteric domain region.

This sequence belongs to the CarB family. Composed of two chains; the small (or glutamine) chain promotes the hydrolysis of glutamine to ammonia, which is used by the large (or ammonia) chain to synthesize carbamoyl phosphate. Tetramer of heterodimers (alpha,beta)4. The cofactor is Mg(2+). Requires Mn(2+) as cofactor.

It catalyses the reaction hydrogencarbonate + L-glutamine + 2 ATP + H2O = carbamoyl phosphate + L-glutamate + 2 ADP + phosphate + 2 H(+). It carries out the reaction hydrogencarbonate + NH4(+) + 2 ATP = carbamoyl phosphate + 2 ADP + phosphate + 2 H(+). It functions in the pathway amino-acid biosynthesis; L-arginine biosynthesis; carbamoyl phosphate from bicarbonate: step 1/1. It participates in pyrimidine metabolism; UMP biosynthesis via de novo pathway; (S)-dihydroorotate from bicarbonate: step 1/3. Large subunit of the glutamine-dependent carbamoyl phosphate synthetase (CPSase). CPSase catalyzes the formation of carbamoyl phosphate from the ammonia moiety of glutamine, carbonate, and phosphate donated by ATP, constituting the first step of 2 biosynthetic pathways, one leading to arginine and/or urea and the other to pyrimidine nucleotides. The large subunit (synthetase) binds the substrates ammonia (free or transferred from glutamine from the small subunit), hydrogencarbonate and ATP and carries out an ATP-coupled ligase reaction, activating hydrogencarbonate by forming carboxy phosphate which reacts with ammonia to form carbamoyl phosphate. The chain is Carbamoyl phosphate synthase large chain from Halobacterium salinarum (strain ATCC 700922 / JCM 11081 / NRC-1) (Halobacterium halobium).